Consider the following 86-residue polypeptide: RNA-binding protein Hfq (86 aa).

The Sm domain occupies 9 to 68; sequence DPYLNTLRKERVPVSIYLVNGIKLQGQIESFDQFVILLKNTVSQMVYKHAISTVVPSRPV. Residues 66-86 are disordered; that stretch reads RPVRLPSAGDSEQADAEPGNA.

This sequence belongs to the Hfq family. In terms of assembly, homohexamer.

Its function is as follows. RNA chaperone that binds small regulatory RNA (sRNAs) and mRNAs to facilitate mRNA translational regulation in response to envelope stress, environmental stress and changes in metabolite concentrations. Also binds with high specificity to tRNAs. The polypeptide is RNA-binding protein Hfq (Ectopseudomonas mendocina (strain ymp) (Pseudomonas mendocina)).